Reading from the N-terminus, the 106-residue chain is Large ribosomal subunit protein uL24 (106 aa).

It belongs to the universal ribosomal protein uL24 family. In terms of assembly, part of the 50S ribosomal subunit.

One of two assembly initiator proteins, it binds directly to the 5'-end of the 23S rRNA, where it nucleates assembly of the 50S subunit. In terms of biological role, one of the proteins that surrounds the polypeptide exit tunnel on the outside of the subunit. The chain is Large ribosomal subunit protein uL24 from Albidiferax ferrireducens (strain ATCC BAA-621 / DSM 15236 / T118) (Rhodoferax ferrireducens).